A 161-amino-acid chain; its full sequence is Allophycocyanin beta chain (161 aa).

N4-methylasparagine is present on N71. C81 serves as a coordination point for (2R,3E)-phycocyanobilin.

Belongs to the phycobiliprotein family. In terms of assembly, heterodimer of an alpha and a beta chain. Post-translationally, contains one covalently linked phycocyanobilin chromophore.

It is found in the cellular thylakoid membrane. Light-harvesting photosynthetic bile pigment-protein from the phycobiliprotein complex. Allophycocyanin has a maximum absorption at approximately 650 nanometers. This Synechocystis sp. (strain ATCC 27184 / PCC 6803 / Kazusa) protein is Allophycocyanin beta chain (apcB).